The chain runs to 1418 residues: Sterol 3-beta-glucosyltransferase (1418 aa).

Over residues 1–16 (MRPFLDDAKRRVDRKL) the composition is skewed to basic and acidic residues. 3 disordered regions span residues 1–59 (MRPF…SREG), 83–188 (ARFD…RSAT), and 207–233 (LKASSTERSQPSLDESGEKGPRGASVS). Over residues 18–28 (ASRQSLSTSRL) the composition is skewed to polar residues. Basic and acidic residues-rich tracts occupy residues 35–44 (DRLKDNHDAQ) and 95–105 (SEQRPRKESSV). The segment covering 106–115 (RKGTSASANT) has biased composition (polar residues). Residues 116–126 (SSPLDSSQRSS) show a composition bias toward low complexity. Composition is skewed to basic and acidic residues over residues 127–139 (SRTDGKSEKESGT) and 147–166 (TISDHKLFRPFESNSKHEPQ). Residues 209-219 (ASSTERSQPSL) are compositionally biased toward polar residues. One can recognise a GRAM 1 domain in the interval 249–288 (EKVLVEYACSLLQSILLQGYMYVTEGHICFYAYLPKKSTV). Positions 289–387 (AIKSGYLYKR…WVKALQKVIF (99 aa)) constitute a PH domain. The disordered stretch occupies residues 462–651 (ISSQHLSPQP…DPTKSFSGAP (190 aa)). Residues 486–497 (RWSLTSGTSRVL) show a composition bias toward polar residues. A compositionally biased stretch (low complexity) spans 508 to 519 (ASASTSHTSLAH). Residues 534-575 (SESILNSFEQGTESSAAWQSMTDAAESASQILNRSDVFQSPT) show a composition bias toward polar residues. Over residues 578-598 (GLDRRPSGGERRGRRNSDETA) the composition is skewed to basic and acidic residues. Positions 599–612 (RSLSTRANVGTGQQ) are enriched in polar residues. The segment covering 615–633 (ELGRRMDGDTSGREARDST) has biased composition (basic and acidic residues). Residues 635–651 (ESDQYTQDPTKSFSGAP) are compositionally biased toward polar residues. The 67-residue stretch at 733–799 (DRFRAHFALP…RDIENVEKEK (67 aa)) folds into the GRAM 2 domain. UDP-alpha-D-glucose contacts are provided by serine 920, arginine 921, aspartate 923, alanine 1223, histidine 1225, histidine 1238, glycine 1242, threonine 1243, aspartate 1262, and glutamine 1263. The tract at residues 1339-1418 (SIASSTPFSP…SGPGRKLSGR (80 aa)) is disordered. The segment covering 1341 to 1355 (ASSTPFSPTPSAKTT) has biased composition (low complexity). Residues 1358–1379 (QDADDDVEDSEEWTFVGDDTDM) are compositionally biased toward acidic residues. Residues 1380 to 1391 (EMSRRLRDRAIS) show a composition bias toward basic and acidic residues.

The protein belongs to the glycosyltransferase 28 family.

Its subcellular location is the cytoplasm. The protein localises to the preautophagosomal structure membrane. It catalyses the reaction a sterol + UDP-alpha-D-glucose = a sterol 3-beta-D-glucoside + UDP + H(+). It carries out the reaction ergosterol + UDP-alpha-D-glucose = ergosteryl 3-beta-D-glucoside + UDP + H(+). Sterol glycosyltransferase responsible for the glycosylation of ergosterol to form ergosterol-glucoside. The sequence is that of Sterol 3-beta-glucosyltransferase from Neosartorya fischeri (strain ATCC 1020 / DSM 3700 / CBS 544.65 / FGSC A1164 / JCM 1740 / NRRL 181 / WB 181) (Aspergillus fischerianus).